Reading from the N-terminus, the 399-residue chain is Sphingosine-1-phosphate phosphatase 2 (399 aa).

4 consecutive transmembrane segments (helical) span residues 88 to 108, 121 to 141, 160 to 180, and 185 to 205; these read YLFQ…FLPF, LIII…VLKW, YGMP…LLIS, and YQYP…LVCL. Residues 136 to 144 are phosphatase sequence motif I; sequence KDVLKWPRP. The phosphatase sequence motif II stretch occupies residues 163 to 166; sequence PSTH. The Proton donor role is filled by His-166. Residues 206–217 are phosphatase sequence motif III; the sequence is SRLYTGMHTVLD. Residue His-213 is the Nucleophile of the active site. Helical transmembrane passes span 219–239, 247–267, 280–300, 318–338, and 371–391; these read LGGV…WTFI, PLFP…YPVS, ILAA…FQLV, TYML…ILLV, and VPYK…FVPM.

The protein belongs to the type 2 lipid phosphate phosphatase family. As to expression, expressed strongly in kidney and heart, followed by brain, colon, small intestine and lung. Not detected in skeletal muscle, thymus, spleen, liver, placenta, and peripheral blood leukocytes.

The protein localises to the endoplasmic reticulum membrane. It carries out the reaction sphinganine 1-phosphate + H2O = sphinganine + phosphate. The catalysed reaction is sphing-4-enine 1-phosphate + H2O = sphing-4-enine + phosphate. It catalyses the reaction (4R)-hydroxysphinganine 1-phosphate + H2O = (4R)-hydroxysphinganine + phosphate. Has specific phosphohydrolase activity towards sphingoid base 1-phosphates. Has high phosphohydrolase activity against dihydrosphingosine-1-phosphate and sphingosine-1-phosphate (S1P) in vitro. Sphingosine-1-phosphate phosphatase activity is needed for efficient recycling of sphingosine into the sphingolipid synthesis pathway. May play a role in attenuating intracellular sphingosine 1-phosphate (S1P) signaling. May play a role in pro-inflammatory signaling. Plays a role in the regulation of pancreatic islet beta-cell endoplasmic reticulum stress and proliferation. This chain is Sphingosine-1-phosphate phosphatase 2, found in Homo sapiens (Human).